A 705-amino-acid polypeptide reads, in one-letter code: Forkhead box protein P1 (705 aa).

The segment covering M1 to G19 has biased composition (polar residues). The segment at M1 to A41 is disordered. S113 is subject to Phosphoserine. Disordered regions lie at residues H267–C286 and A291–H326. Polar residues-rich tracts occupy residues N276–C286 and A291–V311. Residues P314–H326 are compositionally biased toward basic and acidic residues. A Glycyl lysine isopeptide (Lys-Gly) (interchain with G-Cter in SUMO2) cross-link involves residue K315. A C2H2-type zinc finger spans residues G334–H359. The tract at residues V376 to L397 is leucine-zipper. Residues K400 and K405 each participate in a glycyl lysine isopeptide (Lys-Gly) (interchain with G-Cter in SUMO2) cross-link. Residues P410–V414 are CTBP1-binding. A compositionally biased stretch (polar residues) spans T418–L431. The tract at residues T418–S450 is disordered. The segment covering P432–T446 has biased composition (low complexity). K470 is covalently cross-linked (Glycyl lysine isopeptide (Lys-Gly) (interchain with G-Cter in SUMO2)). Residues R493–L583 constitute a DNA-binding region (fork-head). Positions E639 to E705 are disordered. Over residues H640–G651 the composition is skewed to polar residues. Phosphothreonine is present on T681. At S686 the chain carries Phosphoserine. Residues Y695 to E705 show a composition bias toward acidic residues.

In terms of assembly, forms homodimers and heterodimers with FOXP2 and FOXP4. Dimerization is required for DNA-binding. Self-associates. Interacts with CTBP1. Interacts with NCOR2 and AR. Interacts with FOXP2. Interacts with TBR1. Interacts with AURKA; this interaction facilitates the phosphorylation of FOXP1, which suppresses the expression of FBXL7. Interacts with ZMYM2. Isoform 5 is specifically expressed in embryonic stem cells. Highest expression in the lung, brain, and spleen. Lower expression in heart, skeletal muscle, kidney, small intestine (isoform 3 not present) and liver.

The protein resides in the nucleus. Functionally, transcriptional repressor. Can act with CTBP1 to synergistically repress transcription but CTPBP1 is not essential. Plays an important role in the specification and differentiation of lung epithelium. Acts cooperatively with FOXP4 to regulate lung secretory epithelial cell fate and regeneration by restricting the goblet cell lineage program; the function may involve regulation of AGR2. Essential transcriptional regulator of B-cell development. Involved in regulation of cardiac muscle cell proliferation. Involved in the columnar organization of spinal motor neurons. Promotes the formation of the lateral motor neuron column (LMC) and the preganglionic motor column (PGC) and is required for respective appropriate motor axon projections. The segment-appropriate generation of spinal cord motor columns requires cooperation with other Hox proteins. Can regulate PITX3 promoter activity; may promote midbrain identity in embryonic stem cell-derived dopamine neurons by regulating PITX3. Negatively regulates the differentiation of T follicular helper cells T(FH)s. Involved in maintenance of hair follicle stem cell quiescence; the function probably involves regulation of FGF18. Represses transcription of various pro-apoptotic genes and cooperates with NF-kappa B-signaling in promoting B-cell expansion by inhibition of caspase-dependent apoptosis. Binds to CSF1R promoter elements and is involved in regulation of monocyte differentiation and macrophage functions; repression of CSF1R in monocytes seems to involve NCOR2 as corepressor. Involved in endothelial cell proliferation, tube formation and migration indicative for a role in angiogenesis; the role in neovascularization seems to implicate suppression of SEMA5B. Can negatively regulate androgen receptor signaling. Acts as a transcriptional activator of the FBXL7 promoter; this activity is regulated by AURKA. Its function is as follows. Involved in transcriptional regulation in embryonic stem cells (ESCs). Stimulates expression of transcription factors that are required for pluripotency and decreases expression of differentiation-associated genes. Has distinct DNA-binding specifities as compared to the canonical form and preferentially binds DNA with the sequence 5'-CGATACAA-3' (or closely related sequences). Promotes ESC self-renewal and pluripotency. The sequence is that of Forkhead box protein P1 (Foxp1) from Mus musculus (Mouse).